Consider the following 190-residue polypeptide: RRP15-like protein (190 aa).

Basic and acidic residues predominate over residues 1-11 (MSTKNRDRLVV). Disordered stretches follow at residues 1–69 (MSTK…TRKE) and 119–190 (QKTM…SDED). The segment covering 55–66 (QRKKKKVIKKLT) has biased composition (basic residues). Positions 59–84 (KKVIKKLTRKEQSLKHSVKEYRIKLA) form a coiled coil. Residues 119–153 (QKTMSDAVKEKMTARDRKEARERFDGKNFDSDKFA) show a composition bias toward basic and acidic residues. Residues 167–190 (GEEEDEQMNIGDDEIDAGNYSDED) are compositionally biased toward acidic residues.

The protein belongs to the RRP15 family.

The protein is RRP15-like protein of Caenorhabditis briggsae.